Reading from the N-terminus, the 138-residue chain is Ribulose bisphosphate carboxylase small subunit (138 aa).

The protein belongs to the RuBisCO small chain family. As to quaternary structure, heterohexadecamer of 8 large and 8 small subunits.

Its subcellular location is the plastid. The protein resides in the chloroplast. Its function is as follows. RuBisCO catalyzes two reactions: the carboxylation of D-ribulose 1,5-bisphosphate, the primary event in carbon dioxide fixation, as well as the oxidative fragmentation of the pentose substrate in the photorespiration process. Both reactions occur simultaneously and in competition at the same active site. Although the small subunit is not catalytic it is essential for maximal activity. The sequence is that of Ribulose bisphosphate carboxylase small subunit from Pyropia haitanensis (Red seaweed).